The chain runs to 241 residues: Alpha/beta-tubulin-N-acetyltransferase 9 (241 aa).

The region spanning 34–181 (EELRHLTASE…VTLRLAVSEP (148 aa)) is the N-acetyltransferase domain.

This sequence belongs to the acetyltransferase family. GNAT subfamily.

It carries out the reaction N-terminal L-methionyl-[tubulin] + acetyl-CoA = N-terminal N(alpha)-acetyl-L-methionyl-[tubulin] + CoA + H(+). Functionally, N-acetyltransferase that mediates the acetylation of the N-terminal residues of alpha- and beta-tubulin. In Mus musculus (Mouse), this protein is Alpha/beta-tubulin-N-acetyltransferase 9 (Nat9).